Here is a 237-residue protein sequence, read N- to C-terminus: Uridylate kinase (237 aa).

12–15 (KLSG) contacts ATP. An involved in allosteric activation by GTP region spans residues 20 to 25 (GDEGFG). Glycine 54 lines the UMP pocket. 2 residues coordinate ATP: glycine 55 and arginine 59. UMP is bound by residues aspartate 74 and 135-142 (TGSPFFTT). Residues threonine 162, tyrosine 168, and aspartate 171 each contribute to the ATP site.

It belongs to the UMP kinase family. As to quaternary structure, homohexamer.

The protein resides in the cytoplasm. The enzyme catalyses UMP + ATP = UDP + ADP. Its pathway is pyrimidine metabolism; CTP biosynthesis via de novo pathway; UDP from UMP (UMPK route): step 1/1. Allosterically activated by GTP. Inhibited by UTP. Its function is as follows. Catalyzes the reversible phosphorylation of UMP to UDP. This chain is Uridylate kinase, found in Haemophilus ducreyi (strain 35000HP / ATCC 700724).